Reading from the N-terminus, the 291-residue chain is Pyridoxal 5'-phosphate synthase subunit PdxS (291 aa).

D23 is a binding site for D-ribose 5-phosphate. K80 (schiff-base intermediate with D-ribose 5-phosphate) is an active-site residue. G152 is a D-ribose 5-phosphate binding site. R164 contacts D-glyceraldehyde 3-phosphate. D-ribose 5-phosphate is bound by residues G213 and 234–235; that span reads GS.

Belongs to the PdxS/SNZ family. In the presence of PdxT, forms a dodecamer of heterodimers.

It catalyses the reaction aldehydo-D-ribose 5-phosphate + D-glyceraldehyde 3-phosphate + L-glutamine = pyridoxal 5'-phosphate + L-glutamate + phosphate + 3 H2O + H(+). The protein operates within cofactor biosynthesis; pyridoxal 5'-phosphate biosynthesis. Its function is as follows. Catalyzes the formation of pyridoxal 5'-phosphate from ribose 5-phosphate (RBP), glyceraldehyde 3-phosphate (G3P) and ammonia. The ammonia is provided by the PdxT subunit. Can also use ribulose 5-phosphate and dihydroxyacetone phosphate as substrates, resulting from enzyme-catalyzed isomerization of RBP and G3P, respectively. This chain is Pyridoxal 5'-phosphate synthase subunit PdxS, found in Haemophilus influenzae (strain ATCC 51907 / DSM 11121 / KW20 / Rd).